The primary structure comprises 319 residues: MIGLIITAIISAVLIMALLVVAGTFTWVERRLLGFVQERYGPNRVGPFGSLQWVADTVKILTKEDRPPPGADKLTYILAPAIAATPVLAGFGVVAFGDGLVLAPVDVGVLFLLGMMGLTAYAAMLGAWASNNRFSMMGGMRAAAQMLAYEVFLGLSLMGAVMLAGSLSMHAIVEAQRDVWFVVLQPLGAALFCIAGVAAAHRLPFDLPESENDLVAGFITEYTGMSFGLFFLGEYLAVLLVSALAVTLFFGGWLGPWLPGPIWFGLKTAVIAVVFVWLRATLPRPRYDQLLGFAWKIALPLSLLNLLLTGIVVVARSAP.

Transmembrane regions (helical) follow at residues 1 to 21 (MIGL…LLVV), 77 to 97 (ILAP…VAFG), 107 to 127 (VGVL…MLGA), 147 to 167 (LAYE…AGSL), 179 to 199 (VWFV…GVAA), 214 to 234 (LVAG…FLGE), 238 to 258 (VLLV…GPWL), 262 to 282 (IWFG…RATL), and 293 to 313 (FAWK…GIVV).

Belongs to the complex I subunit 1 family. NDH-1 is composed of 14 different subunits. Subunits NuoA, H, J, K, L, M, N constitute the membrane sector of the complex.

The protein localises to the cell inner membrane. It carries out the reaction a quinone + NADH + 5 H(+)(in) = a quinol + NAD(+) + 4 H(+)(out). NDH-1 shuttles electrons from NADH, via FMN and iron-sulfur (Fe-S) centers, to quinones in the respiratory chain. The immediate electron acceptor for the enzyme in this species is believed to be ubiquinone. Couples the redox reaction to proton translocation (for every two electrons transferred, four hydrogen ions are translocated across the cytoplasmic membrane), and thus conserves the redox energy in a proton gradient. This subunit may bind ubiquinone. The protein is NADH-quinone oxidoreductase subunit H 1 of Rhodopseudomonas palustris (strain HaA2).